The following is a 507-amino-acid chain: ATP synthase subunit alpha, chloroplastic (507 aa).

Residue 170 to 177 coordinates ATP; sequence GDRQTGKT.

It belongs to the ATPase alpha/beta chains family. In terms of assembly, F-type ATPases have 2 components, CF(1) - the catalytic core - and CF(0) - the membrane proton channel. CF(1) has five subunits: alpha(3), beta(3), gamma(1), delta(1), epsilon(1). CF(0) has four main subunits: a, b, b' and c.

It localises to the plastid. Its subcellular location is the chloroplast thylakoid membrane. It carries out the reaction ATP + H2O + 4 H(+)(in) = ADP + phosphate + 5 H(+)(out). Its function is as follows. Produces ATP from ADP in the presence of a proton gradient across the membrane. The alpha chain is a regulatory subunit. The chain is ATP synthase subunit alpha, chloroplastic from Lemna minor (Common duckweed).